A 231-amino-acid chain; its full sequence is Ribonuclease 3 (231 aa).

The RNase III domain maps to 6-135 (AAMLKERFGI…FVGALYLDQG (130 aa)). Glu-48 contributes to the Mg(2+) binding site. Residue Asp-52 is part of the active site. Mg(2+) contacts are provided by Asp-121 and Glu-124. Residue Glu-124 is part of the active site. Residues 161 to 230 (DYKTTLQEYL…ARQAYSQLQQ (70 aa)) form the DRBM domain. The segment at 209 to 231 (WGHSKKEAEQSAARQAYSQLQQK) is disordered. Over residues 220-231 (AARQAYSQLQQK) the composition is skewed to polar residues.

This sequence belongs to the ribonuclease III family. In terms of assembly, homodimer. It depends on Mg(2+) as a cofactor.

The protein resides in the cytoplasm. It catalyses the reaction Endonucleolytic cleavage to 5'-phosphomonoester.. Its function is as follows. Digests double-stranded RNA. Involved in the processing of primary rRNA transcript to yield the immediate precursors to the large and small rRNAs (23S and 16S). Processes some mRNAs, and tRNAs when they are encoded in the rRNA operon. Processes pre-crRNA and tracrRNA of type II CRISPR loci if present in the organism. The sequence is that of Ribonuclease 3 from Lactiplantibacillus plantarum (strain ATCC BAA-793 / NCIMB 8826 / WCFS1) (Lactobacillus plantarum).